We begin with the raw amino-acid sequence, 551 residues long: Medium/long-chain-fatty-acid--CoA/3-oxocholest-4-en-26-oate--CoA ligase (551 aa).

ATP contacts are provided by residues 172 to 180 (TGGTTGFPK), Asp-417, Arg-432, and Lys-523.

Belongs to the ATP-dependent AMP-binding enzyme family.

It catalyses the reaction a medium-chain fatty acid + ATP + CoA = a medium-chain fatty acyl-CoA + AMP + diphosphate. It carries out the reaction a long-chain fatty acid + ATP + CoA = a long-chain fatty acyl-CoA + AMP + diphosphate. The catalysed reaction is (25S)-3-oxocholest-4-en-26-oate + ATP + CoA = (25S)-3-oxocholest-4-en-26-oyl-CoA + AMP + diphosphate. Its pathway is lipid metabolism; fatty acid biosynthesis. It participates in steroid metabolism; cholesterol metabolism. Plays an essential role in degradation of the side chains of C-24 branched-chain sterols. Not essential for degradation of straight chain sterols such as cholesterol. Catalyzes the activation of medium/long-chain fatty acids as acyl-coenzyme A (acyl-CoA), which are then transferred to the multifunctional polyketide synthase (PKS) type III for further chain extension. May be involved in the degradation of cholesterol via the degradation of the side chains of C-24 branched-chain sterols. The protein is Medium/long-chain-fatty-acid--CoA/3-oxocholest-4-en-26-oate--CoA ligase of Mycolicibacterium smegmatis (strain ATCC 700084 / mc(2)155) (Mycobacterium smegmatis).